The sequence spans 45 residues: Omega-hexatoxin-Hv2a (45 aa).

3 disulfides stabilise this stretch: Cys4/Cys18, Cys11/Cys24, and Cys17/Cys29.

It belongs to the neurotoxin 15 family. 02 (omega-actx) subfamily. In terms of tissue distribution, expressed by the venom gland.

Its subcellular location is the secreted. In terms of biological role, potent inhibitor of insect (bee brain), but not mammalian (rat trigeminal neurons), voltage-gated calcium channels (Cav). In vivo, injection into lone star ticks (Amblyomma americanum) induces curling of all eight legs into closed loops, followed by death. In Hadronyche versuta (Blue mountains funnel-web spider), this protein is Omega-hexatoxin-Hv2a.